Reading from the N-terminus, the 399-residue chain is S-adenosylmethionine synthase (399 aa).

His-17 contacts ATP. Asp-19 contributes to the Mg(2+) binding site. A K(+)-binding site is contributed by Glu-45. 2 residues coordinate L-methionine: Glu-58 and Gln-101. A flexible loop region spans residues 101–111 (QSPDIAQGVDE). Residues 177-179 (DAK), 244-245 (RF), Asp-253, 259-260 (RK), Ala-276, and Lys-280 contribute to the ATP site. An L-methionine-binding site is contributed by Asp-253. An L-methionine-binding site is contributed by Lys-284.

Belongs to the AdoMet synthase family. Homotetramer; dimer of dimers. Mg(2+) is required as a cofactor. K(+) serves as cofactor.

Its subcellular location is the cytoplasm. The enzyme catalyses L-methionine + ATP + H2O = S-adenosyl-L-methionine + phosphate + diphosphate. The protein operates within amino-acid biosynthesis; S-adenosyl-L-methionine biosynthesis; S-adenosyl-L-methionine from L-methionine: step 1/1. Catalyzes the formation of S-adenosylmethionine (AdoMet) from methionine and ATP. The overall synthetic reaction is composed of two sequential steps, AdoMet formation and the subsequent tripolyphosphate hydrolysis which occurs prior to release of AdoMet from the enzyme. This is S-adenosylmethionine synthase from Listeria monocytogenes serovar 1/2a (strain ATCC BAA-679 / EGD-e).